A 58-amino-acid chain; its full sequence is Alpha-conotoxin-like Pu1.6 (58 aa).

Residues 1 to 17 (MFTVFLLVVLVTTVVFS) form the signal peptide. Residues 18–35 (TSDHRPASNHENRRASKR) constitute a propeptide that is removed on maturation. Cystine bridges form between cysteine 44/cysteine 50 and cysteine 45/cysteine 58. The tract at residues 46–48 (TNP) is lacks the Ser-Xaa-Pro motif that is crucial for potent interaction with nAChR.

It belongs to the conotoxin A superfamily. Expressed by the venom duct.

The protein localises to the secreted. Functionally, alpha-conotoxins act on postsynaptic membranes, they bind to the nicotinic acetylcholine receptors (nAChR) and thus inhibit them. Has possibly a distinct nAChR binding mode from other alpha-conotoxins, due to a different three residue motif (lacks the Ser-Xaa-Pro motif). In Conus pulicarius (Flea-bitten cone), this protein is Alpha-conotoxin-like Pu1.6.